Consider the following 333-residue polypeptide: Serine proteinase inhibitor 2 (333 aa).

Belongs to the serpin family. Poxviruses subfamily.

The protein localises to the host cytoplasm. In terms of biological role, weak inhibitor of the interleukin-1-beta converting enzyme (ICE) and of granzyme B. Does not form a stable complex with ICE, but can for a stable complex with granzyme B. The protein is Serine proteinase inhibitor 2 (SERP2) of Myxoma virus (strain Uriarra) (MYXV).